We begin with the raw amino-acid sequence, 698 residues long: Serotransferrin (698 aa).

The first 19 residues, 1–19, serve as a signal peptide directing secretion; it reads MRLAVGALLVCAVLGLCLA. Transferrin-like domains lie at 25-347 and 361-683; these read VRWC…NLRE and VKWC…NLRK. 2 disulfides stabilise this stretch: Cys28/Cys67 and Cys38/Cys58. At Arg42 the chain carries Dimethylated arginine. A glycan (O-linked (GalNAc...) serine) is linked at Ser51. Fe(3+) contacts are provided by Asp82 and Tyr114. 17 disulfides stabilise this stretch: Cys137–Cys213, Cys156–Cys350, Cys177–Cys193, Cys180–Cys198, Cys190–Cys196, Cys246–Cys260, Cys358–Cys615, Cys364–Cys396, Cys374–Cys387, Cys421–Cys693, Cys437–Cys656, Cys469–Cys542, Cys493–Cys684, Cys503–Cys517, Cys514–Cys525, Cys582–Cys596, and Cys634–Cys639. Positions 139, 143, 145, and 146 each coordinate hydrogencarbonate. Residue Tyr207 participates in Fe(3+) binding. Fe(3+) is bound at residue His268. Ser389 is subject to Phosphoserine; by FAM20C. Asp411 is a binding site for Fe(3+). Asn432 carries an N-linked (GlcNAc...) (complex) asparagine glycan. Fe(3+) is bound at residue Tyr445. The hydrogencarbonate site is built by Thr471, Arg475, Ala477, and Gly478. Residue Asn491 is glycosylated (N-linked (GlcNAc...) asparagine; atypical; partial). Tyr536 serves as a coordination point for Fe(3+). His604 lines the Fe(3+) pocket. N-linked (GlcNAc...) (complex) asparagine glycosylation occurs at Asn630. Position 685 is a phosphoserine; by FAM20C (Ser685).

Belongs to the transferrin family. In terms of assembly, monomer. Part of a complex composed of SLC40A1/ferroportin, TF/transferrin and HEPH/hephaestin that transfers iron from cells to transferrin. (Microbial infection) Binds to Neisseria transferrin-binding protein A (tbpA or tbp1). Forms a large complex with TbpA and TbpB. As to quaternary structure, (Microbial infection) Binds to Neisseria transferrin-binding protein B (tbpb or tbp2). As to expression, expressed by the liver and secreted in plasma.

The protein localises to the secreted. Functionally, transferrins are iron binding transport proteins which can bind two Fe(3+) ions in association with the binding of an anion, usually bicarbonate. It is responsible for the transport of iron from sites of absorption and heme degradation to those of storage and utilization. Serum transferrin may also have a further role in stimulating cell proliferation. (Microbial infection) Serves as an iron source for Neisseria species, which capture the protein and extract its iron for their own use. Its function is as follows. (Microbial infection) Serves as an iron source for parasite T.brucei (strain 427), which capture TF via its own transferrin receptor ESAG6:ESAG7 and extract its iron for its own use. The protein is Serotransferrin of Homo sapiens (Human).